Consider the following 291-residue polypeptide: Ribonuclease Z (291 aa).

The Zn(2+) site is built by His61, His63, Asp65, His66, His133, Asp201, and His257. Asp65 (proton acceptor) is an active-site residue.

The protein belongs to the RNase Z family. As to quaternary structure, homodimer. Requires Zn(2+) as cofactor.

It catalyses the reaction Endonucleolytic cleavage of RNA, removing extra 3' nucleotides from tRNA precursor, generating 3' termini of tRNAs. A 3'-hydroxy group is left at the tRNA terminus and a 5'-phosphoryl group is left at the trailer molecule.. Functionally, zinc phosphodiesterase, which displays some tRNA 3'-processing endonuclease activity. Probably involved in tRNA maturation, by removing a 3'-trailer from precursor tRNA. The chain is Ribonuclease Z from Saccharolobus islandicus (strain L.S.2.15 / Lassen #1) (Sulfolobus islandicus).